The chain runs to 517 residues: Cytochrome P450 monooxygenase bsc11 (517 aa).

A helical membrane pass occupies residues 16–33 (ALPLTCTGLIIIFAFYLS). Asn-204 is a glycosylation site (N-linked (GlcNAc...) asparagine). Cys-448 is a heme binding site.

This sequence belongs to the cytochrome P450 family. Requires heme as cofactor.

It localises to the membrane. The protein operates within mycotoxin biosynthesis. Its function is as follows. Cytochrome P450 monooxygenase; part of the gene cluster that mediates the biosynthesis of the diterpene glucoside brassicicene C. In the first step of the brassicicene C biosynthesis, the bifunctional diterpene synthase bsc8 that possesses both prenyl transferase and terpene cyclase activity, converts isopentenyl diphosphate and dimethylallyl diphosphate into geranylgeranyl diphosphate (GGDP) that is further converted into fusicocca-2,10(14)-diene, the first precursor for brassicicene C. Fusicocca-2,10(14)-diene is then substrate of cytochrome P450 monooxygenase bsc1 for hydroxylation at the C-8 position. Oxidation at C-16 position to aldehyde is then catalyzed by the cytochrome P450 monooyxygenase bsc7, yielding fusicocca-2,10(14)-diene-8-beta,16-diol. Follows the isomerization of the double bond and reduction of aldehyde to alcohol catalyzed by the short-chain dehydrogenase/reductase bsc3 to yield the diol compound fusicocca-1,10(14)-diene-8 beta,16-diol. The next step is the oxidation at the C-3 position of fusicocca-2,10(14)-diene-8-beta,16-diol catalyzed by the alpha-ketoglutarate dependent dioxygenase bsc9, to produce a triol compound. Methylation of the hydroxy group at position 16 is performed by the methyltransferase bsc6. 16-O-methylation is followed by oxidation at the C-13 position to ketone and an alkyl shift of the methyl group leads to brassicicene C. Although the probable acetyltransferase bsc4 is included in the gene cluster, no acetylation reactions are necessary for brassicicene C biosynthesis. However, the fact that brassicicene E, which is a structurally related compound having an acetoxy group at position 12, was previously isolated from another strain of A.brassicicola suggests that the ATCC 96836 strain might also produce a small amount of brassicicene E. The polypeptide is Cytochrome P450 monooxygenase bsc11 (Alternaria brassicicola (Dark leaf spot agent)).